We begin with the raw amino-acid sequence, 608 residues long: Albumin (608 aa).

An N-terminal signal peptide occupies residues 1–18 (MKWVTFLLLLFVSDSAFS). The propeptide occupies 19 to 24 (RGLFRR). 3 consecutive Albumin domains span residues 19–211 (RGLF…ALKE), 212–403 (KALA…EFQP), and 404–601 (LVEE…KLVA). Position 27 (histidine 27) interacts with Cu cation. Residue serine 29 is modified to Phosphoserine. Ca(2+) contacts are provided by glutamate 30 and aspartate 37. Residues cysteine 77 and cysteine 86 are joined by a disulfide bond. Phosphoserine is present on residues serine 82 and serine 89. Position 91 (histidine 91) interacts with Zn(2+). 6 disulfides stabilise this stretch: cysteine 99–cysteine 115, cysteine 114–cysteine 125, cysteine 148–cysteine 193, cysteine 192–cysteine 201, cysteine 224–cysteine 270, and cysteine 269–cysteine 277. Glutamate 268 is a binding site for Ca(2+). Histidine 271 and aspartate 273 together coordinate Zn(2+). The Ca(2+) site is built by aspartate 273, glutamate 276, and aspartate 279. Intrachain disulfides connect cysteine 289/cysteine 303, cysteine 302/cysteine 313, cysteine 340/cysteine 385, cysteine 384/cysteine 393, cysteine 416/cysteine 462, cysteine 461/cysteine 472, cysteine 485/cysteine 501, and cysteine 500/cysteine 511. Phosphoserine is present on serine 297. Serine 443 carries the phosphoserine modification. Residues threonine 444 and threonine 446 each carry the phosphothreonine modification. Residue lysine 460 is modified to N6-succinyllysine. Position 513 is a phosphoserine (serine 513). Cystine bridges form between cysteine 538-cysteine 583 and cysteine 582-cysteine 591. Position 543 is an N6-succinyllysine (lysine 543). Residue lysine 558 is modified to N6-methyllysine. Threonine 570 is subject to Phosphothreonine. N6-succinyllysine is present on lysine 588.

The protein belongs to the ALB/AFP/VDB family. As to quaternary structure, interacts with FCGRT; this interaction regulates ALB homeostasis. Interacts with TASOR. In plasma, occurs in a covalently-linked complex with chromophore-bound alpha-1-microglobulin; this interaction does not prevent fatty acid binding to ALB. Plasma.

It localises to the secreted. Binds water, Ca(2+), Na(+), K(+), fatty acids, hormones, bilirubin and drugs. Its main function is the regulation of the colloidal osmotic pressure of blood. Major zinc transporter in plasma, typically binds about 80% of all plasma zinc. Major calcium and magnesium transporter in plasma, binds approximately 45% of circulating calcium and magnesium in plasma. Potentially has more than two calcium-binding sites and might additionally bind calcium in a non-specific manner. The shared binding site between zinc and calcium at residue Asp-273 suggests a crosstalk between zinc and calcium transport in the blood. The rank order of affinity is zinc &gt; calcium &gt; magnesium. Binds to the bacterial siderophore enterobactin and inhibits enterobactin-mediated iron uptake of E.coli from ferric transferrin, and may thereby limit the utilization of iron and growth of enteric bacteria such as E.coli. Does not prevent iron uptake by the bacterial siderophore aerobactin. The sequence is that of Albumin from Mesocricetus auratus (Golden hamster).